Here is a 76-residue protein sequence, read N- to C-terminus: DNA-directed RNA polymerase subunit epsilon (76 aa).

The protein belongs to the RNA polymerase subunit epsilon family. As to quaternary structure, RNAP is composed of a core of 2 alpha, a beta and a beta' subunit. The core is associated with a delta subunit, and at least one of epsilon or omega. When a sigma factor is associated with the core the holoenzyme is formed, which can initiate transcription.

The enzyme catalyses RNA(n) + a ribonucleoside 5'-triphosphate = RNA(n+1) + diphosphate. Functionally, a non-essential component of RNA polymerase (RNAP). This is DNA-directed RNA polymerase subunit epsilon from Streptococcus pyogenes serotype M1.